A 162-amino-acid chain; its full sequence is Caveolin-2 (162 aa).

Residues M1–K86 lie on the Cytoplasmic side of the membrane. At Y19 the chain carries Phosphotyrosine; by SRC. Residues S20 and S23 each carry the phosphoserine modification. Phosphotyrosine; by SRC is present on Y27. S36 is modified (phosphoserine). Residues F87–L107 constitute an intramembrane region (helical). At S108–D162 the chain is on the cytoplasmic side.

The protein belongs to the caveolin family. Monomer or homodimer. Interacts with CAV1; the interaction forms a stable heterooligomeric complex that is required for targeting to lipid rafts and for caveolae formation. Tyrosine phosphorylated forms do not form heterooligomers with the Tyr-19-phosphorylated form existing as a monomer or dimer, and the Tyr-27-form as a monomer only. Interacts (tyrosine phosphorylated form) with the SH2 domain-containing proteins, RASA1, NCK1 and SRC. Interacts (tyrosine phosphorylated form) with INSR, the interaction (Tyr-27-phosphorylated form) is increased on insulin stimulation. Interacts (Tyr-19 phosphorylated form) with MAPK1 (phosphorylated form); the interaction, promoted by insulin, leads to nuclear location and MAPK1 activation. Interacts with STAT3; the interaction is increased on insulin-induced tyrosine phosphorylation leading to STAT activation. In terms of processing, phosphorylated on serine and tyrosine residues. CAV1 promotes phosphorylation on Ser-23 which then targets the complex to the plasma membrane, lipid rafts and caveolae. Phosphorylation on Ser-36 appears to modulate mitosis in endothelial cells. Phosphorylation on both Tyr-19 and Tyr-27 is required for insulin-induced 'Ser-727' phosphorylation of STAT3 and its activation. Phosphorylation on Tyr-19 is required for insulin-induced phosphorylation of MAPK1 and DNA binding of STAT3. Tyrosine phosphorylation is induced by both EGF and insulin (By. similarity).

Its subcellular location is the nucleus. It is found in the cytoplasm. It localises to the golgi apparatus membrane. The protein localises to the cell membrane. The protein resides in the membrane. Its subcellular location is the caveola. May act as a scaffolding protein within caveolar membranes. Interacts directly with G-protein alpha subunits and can functionally regulate their activity. Acts as an accessory protein in conjunction with CAV1 in targeting to lipid rafts and driving caveolae formation. The Ser-36 phosphorylated form has a role in modulating mitosis in endothelial cells. Positive regulator of cellular mitogenesis of the MAPK signaling pathway. Required for the insulin-stimulated nuclear translocation and activation of MAPK1 and STAT3, and the subsequent regulation of cell cycle progression. In Loxodonta africana (African elephant), this protein is Caveolin-2 (CAV2).